Here is a 293-residue protein sequence, read N- to C-terminus: Energy-coupling factor transporter ATP-binding protein EcfA2 (293 aa).

The region spanning 3 to 246 is the ABC transporter domain; it reads ITFQKVEHRY…ADELEKIGVD (244 aa). 40 to 47 contributes to the ATP binding site; the sequence is GHTGSGKS.

The protein belongs to the ABC transporter superfamily. Energy-coupling factor EcfA family. In terms of assembly, forms a stable energy-coupling factor (ECF) transporter complex composed of 2 membrane-embedded substrate-binding proteins (S component), 2 ATP-binding proteins (A component) and 2 transmembrane proteins (T component).

The protein localises to the cell membrane. ATP-binding (A) component of a common energy-coupling factor (ECF) ABC-transporter complex. Unlike classic ABC transporters this ECF transporter provides the energy necessary to transport a number of different substrates. The sequence is that of Energy-coupling factor transporter ATP-binding protein EcfA2 from Bacillus cereus (strain ATCC 14579 / DSM 31 / CCUG 7414 / JCM 2152 / NBRC 15305 / NCIMB 9373 / NCTC 2599 / NRRL B-3711).